A 147-amino-acid chain; its full sequence is Sec-independent protein translocase protein TatB (147 aa).

A helical transmembrane segment spans residues 2–22 (FSSIGWPEIFTVLILGLIIIG). The tract at residues 96-147 (FDPKKIMASGTEGEAYRERGINPQPAGDSASPQTPSNKESQPKAGFSWDDIT) is disordered. The span at 125–134 (ASPQTPSNKE) shows a compositional bias: polar residues.

This sequence belongs to the TatB family. The Tat system comprises two distinct complexes: a TatABC complex, containing multiple copies of TatA, TatB and TatC subunits, and a separate TatA complex, containing only TatA subunits. Substrates initially bind to the TatABC complex, which probably triggers association of the separate TatA complex to form the active translocon.

It localises to the cell membrane. Its function is as follows. Part of the twin-arginine translocation (Tat) system that transports large folded proteins containing a characteristic twin-arginine motif in their signal peptide across membranes. Together with TatC, TatB is part of a receptor directly interacting with Tat signal peptides. TatB may form an oligomeric binding site that transiently accommodates folded Tat precursor proteins before their translocation. The chain is Sec-independent protein translocase protein TatB from Corynebacterium diphtheriae (strain ATCC 700971 / NCTC 13129 / Biotype gravis).